A 379-amino-acid polypeptide reads, in one-letter code: Cyclin-dependent kinase-like 4 (379 aa).

Residues 4–286 (YEKLAKTGEG…CSQLLESSYF (283 aa)) enclose the Protein kinase domain. ATP is bound by residues 10-18 (TGEGSYGVV) and Lys33. The short motif at 45 to 51 (KKIALRE) is the [NKR]KIAxRE element. Catalysis depends on Asp126, which acts as the Proton acceptor.

This sequence belongs to the protein kinase superfamily. CMGC Ser/Thr protein kinase family. CDC2/CDKX subfamily.

It localises to the cytoplasm. It carries out the reaction L-seryl-[protein] + ATP = O-phospho-L-seryl-[protein] + ADP + H(+). The enzyme catalyses L-threonyl-[protein] + ATP = O-phospho-L-threonyl-[protein] + ADP + H(+). This Homo sapiens (Human) protein is Cyclin-dependent kinase-like 4 (CDKL4).